The primary structure comprises 159 residues: Phosphopantetheine adenylyltransferase (159 aa).

Residue Ser8 coordinates substrate. Residues 8–9 (SF) and His16 contribute to the ATP site. Substrate is bound by residues Lys40, Thr72, and Arg86. Residues 87-89 (GLR), Glu97, and 122-128 (YSFLSSS) contribute to the ATP site.

It belongs to the bacterial CoaD family. Homohexamer. The cofactor is Mg(2+).

The protein localises to the cytoplasm. The catalysed reaction is (R)-4'-phosphopantetheine + ATP + H(+) = 3'-dephospho-CoA + diphosphate. The protein operates within cofactor biosynthesis; coenzyme A biosynthesis; CoA from (R)-pantothenate: step 4/5. Reversibly transfers an adenylyl group from ATP to 4'-phosphopantetheine, yielding dephospho-CoA (dPCoA) and pyrophosphate. The protein is Phosphopantetheine adenylyltransferase of Synechocystis sp. (strain ATCC 27184 / PCC 6803 / Kazusa).